We begin with the raw amino-acid sequence, 348 residues long: Protein pelota homolog (348 aa).

It belongs to the eukaryotic release factor 1 family. Pelota subfamily. In terms of assembly, monomer. A divalent metal cation serves as cofactor.

Its subcellular location is the cytoplasm. May function in recognizing stalled ribosomes, interact with stem-loop structures in stalled mRNA molecules, and effect endonucleolytic cleavage of the mRNA. May play a role in the release non-functional ribosomes and degradation of damaged mRNAs. Has endoribonuclease activity. This is Protein pelota homolog from Methanococcus maripaludis (strain C5 / ATCC BAA-1333).